The sequence spans 378 residues: D-alanine--D-alanine ligase (378 aa).

The region spanning 140–346 (KKIISQAGIR…YSDLIDRLIQ (207 aa)) is the ATP-grasp domain. 170–225 (EEKLGNLTFVKPAKQGSSVGIHRVTNAEEYEKALDDAFKYDYKILVEQGIANPQEI) lines the ATP pocket. Residues Asp300, Glu313, and Asn315 each coordinate Mg(2+).

The protein belongs to the D-alanine--D-alanine ligase family. The cofactor is Mg(2+). It depends on Mn(2+) as a cofactor.

It localises to the cytoplasm. The catalysed reaction is 2 D-alanine + ATP = D-alanyl-D-alanine + ADP + phosphate + H(+). It participates in cell wall biogenesis; peptidoglycan biosynthesis. Cell wall formation. This is D-alanine--D-alanine ligase from Limosilactobacillus reuteri (strain DSM 20016) (Lactobacillus reuteri).